The chain runs to 301 residues: MNPLKKKPRTHSLQNAPEKPDWLKVKLAFPDPKNNPVAIVRNSLEEKKLNTVCESASCPNLNHCWSRKTATYMLGGDICTRRCSYCDVASGKPFPLDPEEPKRIAESSIALGLRHVVITSVNRDDLEDGGAAHFAKTVKEIRKGLPDCKIELLIPDLKVKQEALEIIFECNPDIFNHNLETVKRLFPEVAPQKRYERSLDVLKIASARGFLTKSGLILGMGETLEEVKECMQDLASVGVSLLTLGQYLQPTSTHLPVKEYVVPQVFKDLRIYGKSIGFKGVFSGPLVRSSYHADEQISWNP.

[4Fe-4S] cluster is bound by residues cysteine 53, cysteine 58, cysteine 64, cysteine 79, cysteine 83, cysteine 86, and serine 290. The Radical SAM core domain maps to 65–279 (WSRKTATYML…RIYGKSIGFK (215 aa)).

It belongs to the radical SAM superfamily. Lipoyl synthase family. Requires [4Fe-4S] cluster as cofactor.

Its subcellular location is the cytoplasm. The catalysed reaction is [[Fe-S] cluster scaffold protein carrying a second [4Fe-4S](2+) cluster] + N(6)-octanoyl-L-lysyl-[protein] + 2 oxidized [2Fe-2S]-[ferredoxin] + 2 S-adenosyl-L-methionine + 4 H(+) = [[Fe-S] cluster scaffold protein] + N(6)-[(R)-dihydrolipoyl]-L-lysyl-[protein] + 4 Fe(3+) + 2 hydrogen sulfide + 2 5'-deoxyadenosine + 2 L-methionine + 2 reduced [2Fe-2S]-[ferredoxin]. Its pathway is protein modification; protein lipoylation via endogenous pathway; protein N(6)-(lipoyl)lysine from octanoyl-[acyl-carrier-protein]: step 2/2. Catalyzes the radical-mediated insertion of two sulfur atoms into the C-6 and C-8 positions of the octanoyl moiety bound to the lipoyl domains of lipoate-dependent enzymes, thereby converting the octanoylated domains into lipoylated derivatives. In Leptospira interrogans serogroup Icterohaemorrhagiae serovar copenhageni (strain Fiocruz L1-130), this protein is Lipoyl synthase.